A 46-amino-acid polypeptide reads, in one-letter code: MTQAPPVATTPRNYPIFTVRWLALHTLGIPTVFFLGALAAMQFIRR.

The chain crosses the membrane as a helical span at residues 21 to 37; that stretch reads WLALHTLGIPTVFFLGA. His-25 contributes to the heme binding site.

This sequence belongs to the PsbE/PsbF family. As to quaternary structure, heterodimer of an alpha subunit and a beta subunit. PSII is composed of 1 copy each of membrane proteins PsbA, PsbB, PsbC, PsbD, PsbE, PsbF, PsbH, PsbI, PsbJ, PsbK, PsbL, PsbM, PsbT, PsbX, PsbY, PsbZ, Psb30/Ycf12, peripheral proteins PsbO, CyanoQ (PsbQ), PsbU, PsbV and a large number of cofactors. It forms dimeric complexes. Heme b is required as a cofactor.

The protein resides in the cellular thylakoid membrane. Functionally, this b-type cytochrome is tightly associated with the reaction center of photosystem II (PSII). PSII is a light-driven water:plastoquinone oxidoreductase that uses light energy to abstract electrons from H(2)O, generating O(2) and a proton gradient subsequently used for ATP formation. It consists of a core antenna complex that captures photons, and an electron transfer chain that converts photonic excitation into a charge separation. This is Cytochrome b559 subunit beta from Synechococcus sp. (strain CC9605).